Consider the following 321-residue polypeptide: Leucine-rich repeat-containing protein 46 (321 aa).

4 LRR repeats span residues 45–66, 67–88, 89–110, and 111–132; these read ELQTVRLDREGITTIRNLEGLQ, NLHSLYLQGNKIQQIENLACIP, SLRFLSLAGNQIRQVENLLDLP, and CLQFLDLSENLIETLKLDEFPQ. The 43-residue stretch at 142–184 folds into the LRRCT domain; sequence NSCTNQDGYRELVTEALPLLLDLDGQPVVERWISDEEDEASSD. A phosphoserine mark is found at Ser-175 and Ser-182. The stretch at 201 to 221 forms a coiled coil; sequence LKELEQELSRHREHRQQTALT. A disordered region spans residues 235–321; it reads DLPLLPGVPM…TKTTAKRSKK (87 aa).

Its subcellular location is the cell projection. The protein resides in the cilium. It is found in the flagellum. Its function is as follows. Required for normal spermatogenesis and male fertility. Plays an important role in sperm flagellum biogenesis. This Homo sapiens (Human) protein is Leucine-rich repeat-containing protein 46 (LRRC46).